The following is a 138-amino-acid chain: Cysteine desulfuration protein SufE (138 aa).

The active-site Cysteine persulfide intermediate is Cys-51.

It belongs to the SufE family. In terms of assembly, homodimer. Interacts with SufS.

The protein resides in the cytoplasm. The protein operates within cofactor biosynthesis; iron-sulfur cluster biosynthesis. Participates in cysteine desulfuration mediated by SufS. Cysteine desulfuration mobilizes sulfur from L-cysteine to yield L-alanine and constitutes an essential step in sulfur metabolism for biosynthesis of a variety of sulfur-containing biomolecules. Functions as a sulfur acceptor for SufS, by mediating the direct transfer of the sulfur atom from the S-sulfanylcysteine of SufS, an intermediate product of cysteine desulfuration process. This is Cysteine desulfuration protein SufE from Citrobacter koseri (strain ATCC BAA-895 / CDC 4225-83 / SGSC4696).